We begin with the raw amino-acid sequence, 129 residues long: Fluoride-specific ion channel FluC (129 aa).

Transmembrane regions (helical) follow at residues 8–28 (FFCVAVGGAIGASARFAMVLA), 36–56 (AFPFATLTVNIIGSFFLGLLL), 71–91 (FLGVGLLGAFTTFSTFSVEVV), and 103–123 (ALHIAFNVIICIAAVFAAMML). Na(+)-binding residues include glycine 78 and threonine 81.

This sequence belongs to the fluoride channel Fluc/FEX (TC 1.A.43) family.

The protein localises to the cell inner membrane. It catalyses the reaction fluoride(in) = fluoride(out). Its activity is regulated as follows. Na(+) is not transported, but it plays an essential structural role and its presence is essential for fluoride channel function. In terms of biological role, fluoride-specific ion channel. Important for reducing fluoride concentration in the cell, thus reducing its toxicity. The sequence is that of Fluoride-specific ion channel FluC from Idiomarina loihiensis (strain ATCC BAA-735 / DSM 15497 / L2-TR).